A 313-amino-acid chain; its full sequence is Endo-beta-N-acetylglucosaminidase H (313 aa).

The segment at residues 1–42 (MFTPVRRRVRTAALALSAAAALVLGSTAASGASATPSPAPAP) is a signal peptide (or 44). The 257-residue stretch at 51 to 307 (PTSVAYVEVN…SAFTRELYGS (257 aa)) folds into the GH18 domain. The active-site Proton donor is the Glu174.

This sequence belongs to the glycosyl hydrolase 18 family.

The catalysed reaction is an N(4)-(oligosaccharide-(1-&gt;3)-[oligosaccharide-(1-&gt;6)]-beta-D-Man-(1-&gt;4)-beta-D-GlcNAc-(1-&gt;4)-alpha-D-GlcNAc)-L-asparaginyl-[protein] + H2O = an oligosaccharide-(1-&gt;3)-[oligosaccharide-(1-&gt;6)]-beta-D-Man-(1-&gt;4)-D-GlcNAc + N(4)-(N-acetyl-beta-D-glucosaminyl)-L-asparaginyl-[protein]. Its function is as follows. Cleaves asparagine-linked oligomannose and hybrid, but not complex, oligosaccharides from glycoproteins. The sequence is that of Endo-beta-N-acetylglucosaminidase H from Streptomyces plicatus.